A 596-amino-acid polypeptide reads, in one-letter code: Succinate dehydrogenase flavoprotein subunit (596 aa).

FAD-binding positions include Gly18–Gly23, Thr41–Gly56, and Asp225. His49 carries the post-translational modification Tele-8alpha-FAD histidine. His246 and Thr258 together coordinate substrate. Arg290 acts as the Proton acceptor in catalysis. His357 lines the substrate pocket. Glu391 is a binding site for FAD. Arg402 is a substrate binding site. An FAD-binding site is contributed by Ser407 to Leu408.

It belongs to the FAD-dependent oxidoreductase 2 family. FRD/SDH subfamily. In terms of assembly, part of an enzyme complex containing four subunits: a flavoprotein, an iron-sulfur, cytochrome b-556, and a hydrophobic anchor protein. It depends on FAD as a cofactor.

It localises to the cell inner membrane. The enzyme catalyses a quinone + succinate = fumarate + a quinol. It participates in carbohydrate metabolism; tricarboxylic acid cycle; fumarate from succinate (bacterial route): step 1/1. The polypeptide is Succinate dehydrogenase flavoprotein subunit (sdhA) (Rickettsia conorii (strain ATCC VR-613 / Malish 7)).